The chain runs to 147 residues: Large ribosomal subunit protein uL13 (147 aa).

It belongs to the universal ribosomal protein uL13 family. Part of the 50S ribosomal subunit.

In terms of biological role, this protein is one of the early assembly proteins of the 50S ribosomal subunit, although it is not seen to bind rRNA by itself. It is important during the early stages of 50S assembly. The polypeptide is Large ribosomal subunit protein uL13 (Micrococcus luteus (strain ATCC 4698 / DSM 20030 / JCM 1464 / CCM 169 / CCUG 5858 / IAM 1056 / NBRC 3333 / NCIMB 9278 / NCTC 2665 / VKM Ac-2230) (Micrococcus lysodeikticus)).